A 293-amino-acid polypeptide reads, in one-letter code: Epimerase family protein SDR39U1 (293 aa).

NADP(+)-binding positions include 31 to 32, 58 to 59, Glu-77, Arg-82, and Val-160; these read SR and LA.

This sequence belongs to the NAD(P)-dependent epimerase/dehydratase family. SDR39U1 subfamily. Expressed in adrenal gland.

In terms of biological role, putative NADP-dependent oxidoreductase. The protein is Epimerase family protein SDR39U1 (SDR39U1) of Homo sapiens (Human).